The following is a 150-amino-acid chain: Large ribosomal subunit protein bL9 (150 aa).

This sequence belongs to the bacterial ribosomal protein bL9 family.

In terms of biological role, binds to the 23S rRNA. This Ralstonia nicotianae (strain ATCC BAA-1114 / GMI1000) (Ralstonia solanacearum) protein is Large ribosomal subunit protein bL9.